Here is a 424-residue protein sequence, read N- to C-terminus: Dihydroorotase (424 aa).

Residues histidine 58 and histidine 60 each contribute to the Zn(2+) site. Residues 60 to 62 (HLR), asparagine 92, and asparagine 276 contribute to the substrate site. Aspartate 303 is a Zn(2+) binding site. Residue aspartate 303 is part of the active site. Residues histidine 307 and 321 to 322 (FG) each bind substrate.

This sequence belongs to the metallo-dependent hydrolases superfamily. DHOase family. Class I DHOase subfamily. Zn(2+) serves as cofactor.

It carries out the reaction (S)-dihydroorotate + H2O = N-carbamoyl-L-aspartate + H(+). Its pathway is pyrimidine metabolism; UMP biosynthesis via de novo pathway; (S)-dihydroorotate from bicarbonate: step 3/3. Functionally, catalyzes the reversible cyclization of carbamoyl aspartate to dihydroorotate. The protein is Dihydroorotase of Staphylococcus aureus (strain COL).